We begin with the raw amino-acid sequence, 254 residues long: Ribosomal RNA small subunit methyltransferase G (254 aa).

S-adenosyl-L-methionine contacts are provided by residues Gly84, Phe89, 136–137 (VE), and Arg155.

This sequence belongs to the methyltransferase superfamily. RNA methyltransferase RsmG family.

It is found in the cytoplasm. Functionally, specifically methylates the N7 position of a guanine in 16S rRNA. The sequence is that of Ribosomal RNA small subunit methyltransferase G from Synechococcus sp. (strain CC9311).